A 285-amino-acid chain; its full sequence is uncharacterized protein (285 aa).

The Guanylate cyclase domain maps to 92–199; it reads TLLLADVEES…PTINRTARLR (108 aa).

The protein belongs to the adenylyl cyclase class-4/guanylyl cyclase family.

This is an uncharacterized protein from Mycobacterium tuberculosis (strain ATCC 25618 / H37Rv).